We begin with the raw amino-acid sequence, 746 residues long: Ribosome biogenesis protein BOP1 (746 aa).

The disordered stretch occupies residues 1–116 (MAGSRGAGRT…PCPRTEMASA (116 aa)). Residues 43–65 (SHSTGSDSGVSDSEESVFSGLED) show a composition bias toward low complexity. Over residues 66–87 (SGSDSSEDDDEGDEEGEDGALD) the composition is skewed to acidic residues. Residues 88-99 (DEGHSGIKKTTE) are compositionally biased toward basic and acidic residues. Thr-106 is subject to Phosphothreonine. The residue at position 122 (Tyr-122) is a Phosphotyrosine. A phosphoserine mark is found at Ser-126 and Ser-127. The sufficient for nucleolar localization stretch occupies residues 265 to 427 (MGWIQPRRPR…CLSVSPGGQW (163 aa)). WD repeat units follow at residues 411–450 (GHSD…CVRT), 452–492 (PVGG…RLVA), 532–576 (CHGK…SPFR), 577–615 (RSHG…LTKK), 618–657 (PNCK…KPYR), 661–700 (HHKK…DLLQ), and 716–746 (TRDL…RLFT).

It belongs to the WD repeat BOP1/ERB1 family. Component of the PeBoW complex, composed of BOP1, PES1 and WDR12. The complex is held together by BOP1, which interacts with PES1 via its N-terminal domain and with WDR12 via a high-affinity interaction between the seven-bladed beta-propeller domains of the 2 proteins. The NOP7 complex associates with the 66S pre-ribosome. The PeBoW complex associates with DDX27, BOP1 interacts directly with DDX27.

Its subcellular location is the nucleus. The protein localises to the nucleolus. It localises to the nucleoplasm. Functionally, component of the PeBoW complex, which is required for maturation of 28S and 5.8S ribosomal RNAs and formation of the 60S ribosome. This Homo sapiens (Human) protein is Ribosome biogenesis protein BOP1.